A 362-amino-acid polypeptide reads, in one-letter code: Phosphoserine aminotransferase (362 aa).

Residue Arg42 coordinates L-glutamate. Pyridoxal 5'-phosphate contacts are provided by residues 76–77 (AR), Trp102, Thr154, Asp174, and Gln197. Lys198 is modified (N6-(pyridoxal phosphate)lysine). 239–240 (NT) contacts pyridoxal 5'-phosphate.

This sequence belongs to the class-V pyridoxal-phosphate-dependent aminotransferase family. SerC subfamily. Homodimer. Requires pyridoxal 5'-phosphate as cofactor.

The protein resides in the cytoplasm. The enzyme catalyses O-phospho-L-serine + 2-oxoglutarate = 3-phosphooxypyruvate + L-glutamate. It catalyses the reaction 4-(phosphooxy)-L-threonine + 2-oxoglutarate = (R)-3-hydroxy-2-oxo-4-phosphooxybutanoate + L-glutamate. The protein operates within amino-acid biosynthesis; L-serine biosynthesis; L-serine from 3-phospho-D-glycerate: step 2/3. It functions in the pathway cofactor biosynthesis; pyridoxine 5'-phosphate biosynthesis; pyridoxine 5'-phosphate from D-erythrose 4-phosphate: step 3/5. Functionally, catalyzes the reversible conversion of 3-phosphohydroxypyruvate to phosphoserine and of 3-hydroxy-2-oxo-4-phosphonooxybutanoate to phosphohydroxythreonine. The polypeptide is Phosphoserine aminotransferase (Buchnera aphidicola subsp. Cinara cedri (strain Cc)).